The primary structure comprises 187 residues: Crossover junction endodeoxyribonuclease RuvC (187 aa).

Active-site residues include Asp-7, Glu-67, and Asp-140. Residues Asp-7, Glu-67, and Asp-140 each coordinate Mg(2+).

The protein belongs to the RuvC family. In terms of assembly, homodimer which binds Holliday junction (HJ) DNA. The HJ becomes 2-fold symmetrical on binding to RuvC with unstacked arms; it has a different conformation from HJ DNA in complex with RuvA. In the full resolvosome a probable DNA-RuvA(4)-RuvB(12)-RuvC(2) complex forms which resolves the HJ. Mg(2+) serves as cofactor.

The protein resides in the cytoplasm. It catalyses the reaction Endonucleolytic cleavage at a junction such as a reciprocal single-stranded crossover between two homologous DNA duplexes (Holliday junction).. The RuvA-RuvB-RuvC complex processes Holliday junction (HJ) DNA during genetic recombination and DNA repair. Endonuclease that resolves HJ intermediates. Cleaves cruciform DNA by making single-stranded nicks across the HJ at symmetrical positions within the homologous arms, yielding a 5'-phosphate and a 3'-hydroxyl group; requires a central core of homology in the junction. The consensus cleavage sequence is 5'-(A/T)TT(C/G)-3'. Cleavage occurs on the 3'-side of the TT dinucleotide at the point of strand exchange. HJ branch migration catalyzed by RuvA-RuvB allows RuvC to scan DNA until it finds its consensus sequence, where it cleaves and resolves the cruciform DNA. The chain is Crossover junction endodeoxyribonuclease RuvC from Chlorobaculum parvum (strain DSM 263 / NCIMB 8327) (Chlorobium vibrioforme subsp. thiosulfatophilum).